Here is a 408-residue protein sequence, read N- to C-terminus: Aspartate aminotransferase, cytoplasmic (408 aa).

Positions 36, 133, and 187 each coordinate L-aspartate. At Lys251 the chain carries N6-(pyridoxal phosphate)lysine. Arg379 is an L-aspartate binding site.

It belongs to the class-I pyridoxal-phosphate-dependent aminotransferase family. Homodimer. It depends on pyridoxal 5'-phosphate as a cofactor. In terms of tissue distribution, expressed in all somatic tissues including the nervous system.

It localises to the cytoplasm. It catalyses the reaction L-aspartate + 2-oxoglutarate = oxaloacetate + L-glutamate. Functionally, biosynthesis of L-glutamate from L-aspartate. Important regulator of levels of glutamate, the major excitatory neurotransmitter of the central nervous system. In Caenorhabditis elegans, this protein is Aspartate aminotransferase, cytoplasmic.